A 168-amino-acid chain; its full sequence is Large ribosomal subunit protein uL10 (168 aa).

This sequence belongs to the universal ribosomal protein uL10 family. Part of the ribosomal stalk of the 50S ribosomal subunit. The N-terminus interacts with L11 and the large rRNA to form the base of the stalk. The C-terminus forms an elongated spine to which L12 dimers bind in a sequential fashion forming a multimeric L10(L12)X complex.

Its function is as follows. Forms part of the ribosomal stalk, playing a central role in the interaction of the ribosome with GTP-bound translation factors. In Acidovorax ebreus (strain TPSY) (Diaphorobacter sp. (strain TPSY)), this protein is Large ribosomal subunit protein uL10.